Consider the following 310-residue polypeptide: Quinolinate synthase (310 aa).

Iminosuccinate is bound by residues His-27 and Ser-44. Cys-89 is a binding site for [4Fe-4S] cluster. Iminosuccinate is bound by residues 115–117 (YVN) and Ser-132. Cys-175 is a [4Fe-4S] cluster binding site. Iminosuccinate-binding positions include 201-203 (HPE) and Thr-222. Cys-267 contributes to the [4Fe-4S] cluster binding site.

Belongs to the quinolinate synthase family. Type 2 subfamily. It depends on [4Fe-4S] cluster as a cofactor.

The protein localises to the cytoplasm. The enzyme catalyses iminosuccinate + dihydroxyacetone phosphate = quinolinate + phosphate + 2 H2O + H(+). The protein operates within cofactor biosynthesis; NAD(+) biosynthesis; quinolinate from iminoaspartate: step 1/1. Its function is as follows. Catalyzes the condensation of iminoaspartate with dihydroxyacetone phosphate to form quinolinate. The polypeptide is Quinolinate synthase (Thermus thermophilus (strain ATCC 27634 / DSM 579 / HB8)).